The sequence spans 951 residues: Plasma membrane ATPase (951 aa).

Helical transmembrane passes span 61-81, 93-113, 243-263, and 277-297; these read FLGF…IMAI, WEDF…SFIE, IGNF…IVMF, and LLVL…SVTM. Aspartate 329 serves as the catalytic 4-aspartylphosphate intermediate. The Mg(2+) site is built by aspartate 588 and aspartate 592. Helical transmembrane passes span 647–667, 671–691, 709–729, 752–772, 785–805, and 814–834; these read IYAV…ALIW, FSPF…MTIS, IFAT…IFFW, EMMS…IFVT, LLLV…AVYA, and GIGW…YFPL.

The protein belongs to the cation transport ATPase (P-type) (TC 3.A.3) family. Type IIIA subfamily.

The protein localises to the cell membrane. It catalyses the reaction ATP + H2O + H(+)(in) = ADP + phosphate + 2 H(+)(out). The plasma membrane ATPase of plants and fungi is a hydrogen ion pump. The proton gradient it generates drives the active transport of nutrients by H(+)-symport. The resulting external acidification and/or internal alkinization may mediate growth responses. This Oryza sativa subsp. japonica (Rice) protein is Plasma membrane ATPase.